The following is a 174-amino-acid chain: Nucleoside-triphosphatase THEP1 (174 aa).

ATP is bound by residues 7 to 14 (GRPGSGKS) and 98 to 105 (CIIIDEIG).

The protein belongs to the THEP1 NTPase family.

The enzyme catalyses a ribonucleoside 5'-triphosphate + H2O = a ribonucleoside 5'-diphosphate + phosphate + H(+). In terms of biological role, has nucleotide phosphatase activity towards ATP, GTP, CTP, TTP and UTP. May hydrolyze nucleoside diphosphates with lower efficiency. The protein is Nucleoside-triphosphatase THEP1 of Methanothermobacter thermautotrophicus (strain ATCC 29096 / DSM 1053 / JCM 10044 / NBRC 100330 / Delta H) (Methanobacterium thermoautotrophicum).